The following is a 920-amino-acid chain: 2-oxoadipate dehydrogenase complex component E1 (920 aa).

The disordered stretch occupies residues 299-322 (QGKTRGRQQVKQDGDYSTDPHSRP). The segment covering 308-322 (VKQDGDYSTDPHSRP) has biased composition (basic and acidic residues).

This sequence belongs to the alpha-ketoglutarate dehydrogenase family. As to quaternary structure, the 2-oxoadipate dehydrogenase complex is composed of OADH (2-oxoadipate dehydrogenase; E1a), DLST (dihydrolipoamide succinyltransferase; E2) and DLD (dihydrolipoamide dehydrogenase; E3). E1a functional unit is a dimer. It depends on thiamine diphosphate as a cofactor.

Its subcellular location is the mitochondrion. The catalysed reaction is N(6)-[(R)-lipoyl]-L-lysyl-[protein] + 2-oxoadipate + H(+) = N(6)-[(R)-S(8)-glutaryldihydrolipoyl]-L-lysyl-[protein] + CO2. Its pathway is amino-acid degradation. In terms of biological role, 2-oxoadipate dehydrogenase (E1a) component of the 2-oxoadipate dehydrogenase complex (OADHC). Participates in the first step, rate limiting for the overall conversion of 2-oxoadipate (alpha-ketoadipate) to glutaryl-CoA and CO(2) catalyzed by the whole OADHC. Catalyzes the irreversible decarboxylation of 2-oxoadipate via the thiamine diphosphate (ThDP) cofactor and subsequent transfer of the decarboxylated acyl intermediate on an oxidized dihydrolipoyl group that is covalently amidated to the E2 enzyme (dihydrolipoyllysine-residue succinyltransferase or DLST). Can catalyze the decarboxylation of 2-oxoglutarate in vitro, but at a much lower rate than 2-oxoadipate. Responsible for the last step of L-lysine, L-hydroxylysine and L-tryptophan catabolism with the common product being 2-oxoadipate. The protein is 2-oxoadipate dehydrogenase complex component E1 (dhtkd1) of Danio rerio (Zebrafish).